The primary structure comprises 863 residues: Glycerol-3-phosphate acyltransferase (863 aa).

The interval 1-29 (MPKKNSPLLPKETTTTQSSVDTSGSSNLT) is disordered. Residues 12–29 (ETTTTQSSVDTSGSSNLT) are compositionally biased toward polar residues. The short motif at 343-348 (SHRSHM) is the HXXXXD motif element.

This sequence belongs to the GPAT/DAPAT family.

It is found in the cell inner membrane. It catalyses the reaction sn-glycerol 3-phosphate + an acyl-CoA = a 1-acyl-sn-glycero-3-phosphate + CoA. Its pathway is phospholipid metabolism; CDP-diacylglycerol biosynthesis; CDP-diacylglycerol from sn-glycerol 3-phosphate: step 1/3. In Xylella fastidiosa (strain M23), this protein is Glycerol-3-phosphate acyltransferase.